We begin with the raw amino-acid sequence, 63 residues long: Protein Wfdc21 (63 aa).

The first 24 residues, 1–24, serve as a signal peptide directing secretion; that stretch reads MKLGAFLLLVSLITLSLEVQELQA. Positions 25 to 63 constitute a WAP; atypical domain; the sequence is AVRPLQLLGTCAELCRGDWDCGPEEQCVSIGCSHICTTN. 3 cysteine pairs are disulfide-bonded: C35-C56, C39-C51, and C45-C60.

In terms of tissue distribution, predominantly expressed in white adipose tissue and liver.

Its subcellular location is the secreted. In terms of biological role, may promote activation of the metalloproteinase MMP2. The chain is Protein Wfdc21 from Mus musculus (Mouse).